Here is a 125-residue protein sequence, read N- to C-terminus: MPGRHVSRVRALYKRVLQLHRVLPPDLKSLGDQYVKDEFRRHKTVGSDEAQRFLQEWEVYATALLQQANENRQNSTGKACFGTFLPEEKLNDFRDEQIGQLQELMQEATKPNRQFSISESMKPKF.

The N-terminal 30 residues, Met-1–Leu-30, are a transit peptide targeting the mitochondrion.

The protein belongs to the complex I LYR family. SDHAF3 subfamily. As to quaternary structure, interacts with SDHB within an SDHA-SDHB subcomplex.

It is found in the mitochondrion matrix. Its function is as follows. Plays an essential role in the assembly of succinate dehydrogenase (SDH), an enzyme complex (also referred to as respiratory complex II) that is a component of both the tricarboxylic acid (TCA) cycle and the mitochondrial electron transport chain, and which couples the oxidation of succinate to fumarate with the reduction of ubiquinone (coenzyme Q) to ubiquinol. Promotes maturation of the iron-sulfur protein subunit SDHB of the SDH catalytic dimer, protecting it from the deleterious effects of oxidants. May act together with SDHAF1. The sequence is that of Succinate dehydrogenase assembly factor 3, mitochondrial from Homo sapiens (Human).